Here is a 940-residue protein sequence, read N- to C-terminus: Valine--tRNA ligase (940 aa).

The 'HIGH' region motif lies at 47–57 (PNVTGILHMGH). Positions 564 to 568 (KLSKS) match the 'KMSKS' region motif. ATP is bound at residue K567. Residues 873 to 937 (VEHIAKEKTR…ELQSILDKLA (65 aa)) are a coiled coil.

It belongs to the class-I aminoacyl-tRNA synthetase family. ValS type 1 subfamily. As to quaternary structure, monomer.

It is found in the cytoplasm. The enzyme catalyses tRNA(Val) + L-valine + ATP = L-valyl-tRNA(Val) + AMP + diphosphate. Functionally, catalyzes the attachment of valine to tRNA(Val). As ValRS can inadvertently accommodate and process structurally similar amino acids such as threonine, to avoid such errors, it has a 'posttransfer' editing activity that hydrolyzes mischarged Thr-tRNA(Val) in a tRNA-dependent manner. The protein is Valine--tRNA ligase of Chlamydia abortus (strain DSM 27085 / S26/3) (Chlamydophila abortus).